Consider the following 75-residue polypeptide: MLKIRLKRIGRRGMPSYRVVVMRSQTRRDGKAIEDLGFYNPISKQCVINKERIKVRLSQGAQMTETVKYLYEVKA.

The protein belongs to the bacterial ribosomal protein bS16 family.

The protein localises to the plastid. It localises to the chloroplast. The sequence is that of Small ribosomal subunit protein bS16c from Cyanidioschyzon merolae (strain NIES-3377 / 10D) (Unicellular red alga).